We begin with the raw amino-acid sequence, 234 residues long: Probable transcriptional regulatory protein MYCGA1330 (234 aa).

Belongs to the TACO1 family.

The protein resides in the cytoplasm. The sequence is that of Probable transcriptional regulatory protein MYCGA1330 from Mycoplasmoides gallisepticum (strain R(low / passage 15 / clone 2)) (Mycoplasma gallisepticum).